The primary structure comprises 647 residues: Protein cueball (647 aa).

Residues 1 to 22 form the signal peptide; that stretch reads MLWCPSVLVPLIAVAACLPVLA. At 23-534 the chain is on the extracellular side; sequence IGTPLEWEFA…CMTPSPWTSN (512 aa). Residues Asn80 and Asn106 are each glycosylated (N-linked (GlcNAc...) asparagine). LDL-receptor class B repeat units lie at residues 119–166, 167–211, and 212–257; these read RNLF…DVCR, RKLY…DQLS, and DRIF…TNDA. Asn175 carries N-linked (GlcNAc...) asparagine glycosylation. Asn316 is a glycosylation site (N-linked (GlcNAc...) asparagine). 2 consecutive EGF-like domains span residues 365–401 and 436–473; these read DEKT…SRCE and EISK…ERCE. Disulfide bonds link Cys376-Cys389, Cys391-Cys400, Cys440-Cys450, Cys444-Cys461, and Cys463-Cys472. Asn475 is a glycosylation site (N-linked (GlcNAc...) asparagine). Residues 535–555 traverse the membrane as a helical segment; sequence VIIVLVLGIVSCFFLVAVIVH. Residues 556 to 647 are Cytoplasmic-facing; sequence GFRRLYKPKR…LIHNMDDDLY (92 aa).

This sequence belongs to the cueball family.

The protein localises to the cell membrane. Functionally, has a role in spermatogenesis and oogenesis. The polypeptide is Protein cueball (Drosophila pseudoobscura pseudoobscura (Fruit fly)).